The following is a 301-amino-acid chain: MEQQKFPNPRIFEDIDATDFSKHNKKHVTEDFVAENFKDVGWRVYRPFNDTGIDLIAKKFVCPDGHTKWNQNLTKEMTCSECGKSLIEITRFIQVKTREVKQVKTREAKGEKFFFGYTLKSKDFRTDPRHVFLLYSDFTMDFIILPMYDYLNLFYTNQSLGSTHFSTPSFRQGNNKLNGLSKDKNDNWVWSGVSFNEFVNEKGMDKLSCPIYDIELESYTKKIQELKFSLFYRYSPGRKNQVSAPTVEFINNHFSIFISLPKEAIASKRKAHLESLRQDLPEDLKKSVNEGYLVKFKGVDL.

Residues 62 to 82 (CPDGHTKWNQNLTKEMTCSEC) form a CHC2-type zinc finger.

Heterotetramer of two alpha and two beta subunits. The alpha subunit is believed to be responsible for DNA recognition, while the beta subunit is thought to mediate cleavage. The cofactor is Zn(2+).

The catalysed reaction is Endonucleolytic cleavage of DNA to give specific double-stranded fragments with terminal 5'-phosphates.. In terms of biological role, a P subtype restriction enzyme that recognizes the double-stranded sequence 5'-CCN(7)GG-3' and cleaves after N-7. This Bacillus sp. (strain NEB-606) protein is Type II restriction enzyme BslI subunit beta.